The primary structure comprises 435 residues: Secreted RxLR effector protein 35 (435 aa).

A signal peptide spans 1–22 (MRGAYYIIIALCVVASSQVAAG). The short motif at 48 to 65 (RFLRGSRVVHDDLANEER) is the RxLR-dEER element. The disordered stretch occupies residues 336-357 (RPKRTTDGNTGTISLPTKPTKT). The span at 342-354 (DGNTGTISLPTKP) shows a compositional bias: polar residues.

Belongs to the RxLR effector family.

The protein localises to the secreted. It localises to the host nucleus. Its function is as follows. Secreted effector that acts as an elicitor that induces cell death in host plant cells. This chain is Secreted RxLR effector protein 35, found in Plasmopara viticola (Downy mildew of grapevine).